The primary structure comprises 1374 residues: DNA-directed RNA polymerase subunit beta' (1374 aa).

The interval 1–47 (MTSTSPKSRKPSTKTTKSKSKSKSKSKAAKAAAAGASPALARTPPQF) is disordered. Over residues 7 to 28 (KSRKPSTKTTKSKSKSKSKSKA) the composition is skewed to basic residues. The span at 29-39 (AKAAAAGASPA) shows a compositional bias: low complexity. Zn(2+) contacts are provided by Cys-258, Cys-325, Cys-332, and Cys-335. The segment at 1344-1374 (RPTGENELEEEQLPDPSALEGLQQEGLLTEE) is disordered. Residues 1362–1374 (LEGLQQEGLLTEE) are compositionally biased toward low complexity.

The protein belongs to the RNA polymerase beta' chain family. RpoC2 subfamily. As to quaternary structure, in cyanobacteria the RNAP catalytic core is composed of 2 alpha, 1 beta, 1 beta', 1 gamma and 1 omega subunit. When a sigma factor is associated with the core the holoenzyme is formed, which can initiate transcription. The cofactor is Zn(2+).

It catalyses the reaction RNA(n) + a ribonucleoside 5'-triphosphate = RNA(n+1) + diphosphate. Functionally, DNA-dependent RNA polymerase catalyzes the transcription of DNA into RNA using the four ribonucleoside triphosphates as substrates. The chain is DNA-directed RNA polymerase subunit beta' from Prochlorococcus marinus (strain MIT 9313).